Consider the following 210-residue polypeptide: Oxygen-insensitive NADPH nitroreductase (210 aa).

150-155 (GVSLMG) contributes to the NADP(+) binding site.

Belongs to the nitroreductase family.

Its function is as follows. Reduction of a variety of nitroaromatic compounds using NADPH as source of reducing equivalents; two electrons are transferred. The protein is Oxygen-insensitive NADPH nitroreductase (rdxA) of Helicobacter acinonychis (strain Sheeba).